Reading from the N-terminus, the 259-residue chain is tRNA pseudouridine synthase A (259 aa).

Residue Asp-52 is the Nucleophile of the active site. Substrate is bound at residue Tyr-113.

This sequence belongs to the tRNA pseudouridine synthase TruA family. In terms of assembly, homodimer.

The catalysed reaction is uridine(38/39/40) in tRNA = pseudouridine(38/39/40) in tRNA. Its function is as follows. Formation of pseudouridine at positions 38, 39 and 40 in the anticodon stem and loop of transfer RNAs. This Allorhizobium ampelinum (strain ATCC BAA-846 / DSM 112012 / S4) (Agrobacterium vitis (strain S4)) protein is tRNA pseudouridine synthase A.